A 395-amino-acid chain; its full sequence is Putative 8-amino-7-oxononanoate synthase (395 aa).

R23 lines the substrate pocket. 110–111 (GY) contacts pyridoxal 5'-phosphate. H135 is a binding site for substrate. Pyridoxal 5'-phosphate is bound by residues S182, 207–210 (DEAH), and 239–242 (TFSK). Residue K242 is modified to N6-(pyridoxal phosphate)lysine. T356 provides a ligand contact to substrate.

Belongs to the class-II pyridoxal-phosphate-dependent aminotransferase family. BioF subfamily. Homodimer. It depends on pyridoxal 5'-phosphate as a cofactor.

The enzyme catalyses 6-carboxyhexanoyl-[ACP] + L-alanine + H(+) = (8S)-8-amino-7-oxononanoate + holo-[ACP] + CO2. It functions in the pathway cofactor biosynthesis; biotin biosynthesis. Catalyzes the decarboxylative condensation of pimeloyl-[acyl-carrier protein] and L-alanine to produce 8-amino-7-oxononanoate (AON), [acyl-carrier protein], and carbon dioxide. This is Putative 8-amino-7-oxononanoate synthase (bioF) from Bacillus cereus (strain G9842).